The sequence spans 210 residues: Thymidylate kinase (210 aa).

An ATP-binding site is contributed by 11-18; sequence GLEGAGKS.

The protein belongs to the thymidylate kinase family.

It catalyses the reaction dTMP + ATP = dTDP + ADP. Its function is as follows. Phosphorylation of dTMP to form dTDP in both de novo and salvage pathways of dTTP synthesis. The protein is Thymidylate kinase of Vibrio parahaemolyticus serotype O3:K6 (strain RIMD 2210633).